The following is a 348-amino-acid chain: 4-hydroxyphenylpyruvate dioxygenase (348 aa).

VOC domains follow at residues 11 to 141 (GFAF…ITSP) and 151 to 303 (AIDH…IFTE). The Fe cation site is built by His154, His232, and Glu312.

This sequence belongs to the 4HPPD family. The cofactor is Fe cation.

The enzyme catalyses 3-(4-hydroxyphenyl)pyruvate + O2 = homogentisate + CO2. In terms of biological role, catalyzes the transformation of p-hydroxyphenylpyruvate into HGA. Has hemolytic and brown pigment production activity. This Legionella pneumophila subsp. pneumophila (strain Philadelphia 1 / ATCC 33152 / DSM 7513) protein is 4-hydroxyphenylpyruvate dioxygenase (lly).